A 290-amino-acid chain; its full sequence is 33 kDa chaperonin (290 aa).

Disulfide bonds link Cys-235–Cys-237 and Cys-268–Cys-271.

This sequence belongs to the HSP33 family. Under oxidizing conditions two disulfide bonds are formed involving the reactive cysteines. Under reducing conditions zinc is bound to the reactive cysteines and the protein is inactive.

The protein localises to the cytoplasm. Redox regulated molecular chaperone. Protects both thermally unfolding and oxidatively damaged proteins from irreversible aggregation. Plays an important role in the bacterial defense system toward oxidative stress. The protein is 33 kDa chaperonin of Streptococcus pneumoniae (strain P1031).